The sequence spans 86 residues: Large ribosomal subunit protein bL27 (86 aa).

Positions 1 to 26 are disordered; the sequence is MATKKAGGSSRNGRDSAGRRLGIKKS.

This sequence belongs to the bacterial ribosomal protein bL27 family.

This Rickettsia typhi (strain ATCC VR-144 / Wilmington) protein is Large ribosomal subunit protein bL27.